A 577-amino-acid polypeptide reads, in one-letter code: MRISISSVVSSTTSRFVHRNLQGKGNPRIAPSSIDLCGMCYWGRAFSSGSGDYREILRNGLHSMKLDDAIGLFGGMVKSRPLPSIFEFNKLLSAIAKMKKFDLVISLGEKMQRLGISHNLYTYNILINCFCRRSQISLALALLGKMMKLGYEPSIVTLSSLLNGYCHGKRISDAVALVDQMVEMGYRPDTITFTTLIHGLFLHNKASEAVALVDRMVQRGCQPNLVTYGVVVNGLCKRGDIDLAFNLLNKMEAAKIEANVVIYSTVIDSLCKYRHEDDALNLFTEMENKGVRPNVITYSSLISCLCNYERWSDASRLLSDMIERKINPNVVTFNALIDAFVKEGKLVEAEKLYDEMIKRSIDPDIFTYSSLINGFCMHDRLDEAKHMFELMISKDCFPNVVTYNTLINGFCKAKRIDEGVELFREMSQRGLVGNTVTYTTLIHGFFQARDCDNAQMVFKQMVSDGVHPNIMTYNTLLDGLCKNGKLEKAMVVFEYLQRSKMEPTIYTYNIMIEGMCKAGKVEDGWDLFCSLSLKGVKPDVIIYNTMISGFCRKGLKEEADALFRKMREDGPLPDSGT.

15 PPR repeats span residues 49-83, 84-118, 119-153, 154-188, 189-223, 224-258, 259-293, 294-328, 329-363, 364-398, 399-433, 434-468, 469-503, 504-538, and 539-573; these read GSGD…RPLP, SIFE…GISH, NLYT…GYEP, SIVT…GYRP, DTIT…GCQP, NLVT…KIEA, NVVI…GVRP, NVIT…KINP, NVVT…SIDP, DIFT…DCFP, NVVT…GLVG, NTVT…GVHP, NIMT…KMEP, TIYT…GVKP, and DVII…GPLP.

Belongs to the PPR family. P subfamily.

The sequence is that of Pentatricopeptide repeat-containing protein At1g63400 from Arabidopsis thaliana (Mouse-ear cress).